The sequence spans 91 residues: Small ribosomal subunit protein bS20 (91 aa).

Residues 1-25 form a disordered region; sequence MANTKSAEKRHRQSLKRRARNVTVR. A compositionally biased stretch (basic residues) spans 8–20; the sequence is EKRHRQSLKRRAR.

It belongs to the bacterial ribosomal protein bS20 family.

Functionally, binds directly to 16S ribosomal RNA. The protein is Small ribosomal subunit protein bS20 of Myxococcus xanthus (strain DK1622).